Reading from the N-terminus, the 449-residue chain is Glucose-6-phosphate isomerase (449 aa).

Glutamate 291 functions as the Proton donor in the catalytic mechanism. Active-site residues include histidine 312 and lysine 426.

Belongs to the GPI family.

The protein resides in the cytoplasm. The catalysed reaction is alpha-D-glucose 6-phosphate = beta-D-fructose 6-phosphate. The protein operates within carbohydrate biosynthesis; gluconeogenesis. Its pathway is carbohydrate degradation; glycolysis; D-glyceraldehyde 3-phosphate and glycerone phosphate from D-glucose: step 2/4. Its function is as follows. Catalyzes the reversible isomerization of glucose-6-phosphate to fructose-6-phosphate. In Streptococcus pyogenes serotype M12 (strain MGAS2096), this protein is Glucose-6-phosphate isomerase.